We begin with the raw amino-acid sequence, 200 residues long: MARVYVGNLDPRVTAREIEDEFRVFGVLRSVWVARKPPGFAFIDFDDRRDAEDAIRDLDGKNGWRVELSTKAGSGRGRDRSGGSDMKCYECGEPGHFARECRLRIGSGGLGSGRRRSRSRSRSPRYRGRSRSRSPRYRRSPSYGRSPRDRSPKRRSYSRSPPPARARSYSRSPPPPRERSYSRSPAQPANREESPYANNA.

Positions 2 to 71 (ARVYVGNLDP…NGWRVELSTK (70 aa)) constitute an RRM domain. A CCHC-type zinc finger spans residues 86 to 103 (MKCYECGEPGHFARECRL). Positions 105–200 (IGSGGLGSGR…REESPYANNA (96 aa)) are disordered. The segment covering 113–139 (GRRRSRSRSRSPRYRGRSRSRSPRYRR) has biased composition (basic residues).

It belongs to the splicing factor SR family. In terms of processing, extensively phosphorylated on serine residues in the RS domain. In terms of tissue distribution, expressed in roots, leaves and immature seeds.

The protein localises to the nucleus. Involved in pre-mRNA splicing. In protoplast assay, enhances splicing efficiency of WAXY intron 1 and alters the selection of the 5'-splice sites by stimulating site 1 (proximal site). This chain is Serine/arginine-rich splicing factor RSZ23 (RSZ23), found in Oryza sativa subsp. japonica (Rice).